We begin with the raw amino-acid sequence, 96 residues long: CLAVATA3/ESR (CLE)-related protein 43 (96 aa).

The signal sequence occupies residues 1-28 (MGCRDILLTFSVALLLISLFQIWLFREG). The segment at 71 to 96 (FGLNNTNSRFEDSNRRIPSSPDRLHN) is disordered. N74 is a glycosylation site (N-linked (GlcNAc...) asparagine). P88 and P91 each carry hydroxyproline. Residue P91 is glycosylated (O-linked (Ara...) hydroxyproline).

Belongs to the CLV3/ESR signal peptide family. Post-translationally, the O-glycosylation (arabinosylation) of the hydroxyproline Pro-91 enhances binding affinity of the CLE43p peptide for its receptor. In terms of tissue distribution, expressed at low levels in seedlings.

The protein localises to the secreted. It localises to the extracellular space. Its function is as follows. Extracellular signal peptide that regulates cell fate. Promotes pollen tube growth prolongation in a SKM1 and SKM2-dependent manner, especially under relatively high temperature (at 30 degrees Celsius), thus conferring tolerance against high temperature probably through the maintenance of mitochondrial activity. This is CLAVATA3/ESR (CLE)-related protein 43 from Arabidopsis thaliana (Mouse-ear cress).